The sequence spans 282 residues: Undecaprenyl-diphosphatase (282 aa).

5 helical membrane passes run 90–110 (YRLGWYVIIGTIPICILGLFF), 121–141 (LWVVVTALVVFSGVIALAEYV), 194–214 (FGFLLAIPAVFASGLFSLPDA), 228–248 (QLLVATLIAFVLGLTAVAWLL), and 256–276 (MYWFVGYRVLVGTGMLVLLAT).

The protein belongs to the UppP family.

It localises to the cell membrane. It catalyses the reaction di-trans,octa-cis-undecaprenyl diphosphate + H2O = di-trans,octa-cis-undecaprenyl phosphate + phosphate + H(+). In terms of biological role, catalyzes the dephosphorylation of undecaprenyl diphosphate (UPP). Confers resistance to bacitracin. In Mycobacterium tuberculosis (strain ATCC 25618 / H37Rv), this protein is Undecaprenyl-diphosphatase.